Reading from the N-terminus, the 471-residue chain is Adenosylhomocysteinase (471 aa).

Positions 60, 135, and 196 each coordinate substrate. Position 197–199 (197–199 (TTT)) interacts with NAD(+). Substrate-binding residues include Lys226 and Asp230. NAD(+) contacts are provided by residues Asn231, 260 to 265 (GYGDVG), Glu283, Asn318, 339 to 341 (IGH), and Asn387.

The protein belongs to the adenosylhomocysteinase family. NAD(+) serves as cofactor.

It localises to the cytoplasm. It catalyses the reaction S-adenosyl-L-homocysteine + H2O = L-homocysteine + adenosine. It participates in amino-acid biosynthesis; L-homocysteine biosynthesis; L-homocysteine from S-adenosyl-L-homocysteine: step 1/1. Its function is as follows. May play a key role in the regulation of the intracellular concentration of adenosylhomocysteine. This Chlorobaculum parvum (strain DSM 263 / NCIMB 8327) (Chlorobium vibrioforme subsp. thiosulfatophilum) protein is Adenosylhomocysteinase.